Reading from the N-terminus, the 322-residue chain is N-acetyl-gamma-glutamyl-phosphate reductase (322 aa).

C132 is a catalytic residue.

This sequence belongs to the NAGSA dehydrogenase family. Type 1 subfamily.

The protein localises to the cytoplasm. It catalyses the reaction N-acetyl-L-glutamate 5-semialdehyde + phosphate + NADP(+) = N-acetyl-L-glutamyl 5-phosphate + NADPH + H(+). It functions in the pathway amino-acid biosynthesis; L-arginine biosynthesis; N(2)-acetyl-L-ornithine from L-glutamate: step 3/4. Functionally, catalyzes the NADPH-dependent reduction of N-acetyl-5-glutamyl phosphate to yield N-acetyl-L-glutamate 5-semialdehyde. The protein is N-acetyl-gamma-glutamyl-phosphate reductase of Parabacteroides distasonis (strain ATCC 8503 / DSM 20701 / CIP 104284 / JCM 5825 / NCTC 11152).